A 107-amino-acid chain; its full sequence is Ferredoxin 1 (107 aa).

4Fe-4S ferredoxin-type domains lie at 2 to 30 (TFVV…YEGP) and 31 to 60 (NFLV…SEDE). Cys-9 and Cys-17 together coordinate [3Fe-4S] cluster. [4Fe-4S] cluster contacts are provided by Cys-21, Cys-40, Cys-43, and Cys-46. Cys-50 provides a ligand contact to [3Fe-4S] cluster.

It depends on [4Fe-4S] cluster as a cofactor. Requires [3Fe-4S] cluster as cofactor.

Ferredoxins are iron-sulfur proteins that transfer electrons in a wide variety of metabolic reactions. The polypeptide is Ferredoxin 1 (fdxA) (Pseudomonas aeruginosa (strain ATCC 15692 / DSM 22644 / CIP 104116 / JCM 14847 / LMG 12228 / 1C / PRS 101 / PAO1)).